The sequence spans 203 residues: uncharacterized protein (203 aa).

It belongs to the mimivirus L332/L333/L334 family.

This is an uncharacterized protein from Acanthamoeba polyphaga mimivirus (APMV).